We begin with the raw amino-acid sequence, 153 residues long: Ribosome maturation factor RimP (153 aa).

It belongs to the RimP family.

It localises to the cytoplasm. Required for maturation of 30S ribosomal subunits. This chain is Ribosome maturation factor RimP, found in Coxiella burnetii (strain Dugway 5J108-111).